Consider the following 176-residue polypeptide: Conidiation-specific protein 8 (176 aa).

Disordered regions lie at residues 1-66 and 79-162; these read MDDT…SKLI and AASE…PQGF. Residues 79 to 99 are compositionally biased toward low complexity; the sequence is AASEAFRSERSASTSSTTSET.

The polypeptide is Conidiation-specific protein 8 (con-8) (Neurospora crassa (strain ATCC 24698 / 74-OR23-1A / CBS 708.71 / DSM 1257 / FGSC 987)).